A 232-amino-acid chain; its full sequence is uncharacterized protein (232 aa).

This is an uncharacterized protein from Escherichia coli (strain K12).